The sequence spans 331 residues: Glyoxylate reductase (331 aa).

Residues 158–161 (FGRI), 180–182 (SRT), and 239–241 (TSR) contribute to the NADP(+) site. Catalysis depends on residues arginine 241 and glutamate 270. Histidine 288 (proton donor) is an active-site residue. An NADP(+)-binding site is contributed by 288–290 (HIG).

This sequence belongs to the D-isomer specific 2-hydroxyacid dehydrogenase family. GyaR subfamily. Homodimer.

Its subcellular location is the cytoplasm. The catalysed reaction is glycolate + NAD(+) = glyoxylate + NADH + H(+). The sequence is that of Glyoxylate reductase from Thermococcus litoralis (strain ATCC 51850 / DSM 5473 / JCM 8560 / NS-C).